The sequence spans 391 residues: Histidinol-phosphate aminotransferase (391 aa).

Residue K245 is modified to N6-(pyridoxal phosphate)lysine.

This sequence belongs to the class-II pyridoxal-phosphate-dependent aminotransferase family. Histidinol-phosphate aminotransferase subfamily. In terms of assembly, homodimer. Pyridoxal 5'-phosphate serves as cofactor.

The catalysed reaction is L-histidinol phosphate + 2-oxoglutarate = 3-(imidazol-4-yl)-2-oxopropyl phosphate + L-glutamate. It functions in the pathway amino-acid biosynthesis; L-histidine biosynthesis; L-histidine from 5-phospho-alpha-D-ribose 1-diphosphate: step 7/9. The polypeptide is Histidinol-phosphate aminotransferase (Bifidobacterium adolescentis (strain ATCC 15703 / DSM 20083 / NCTC 11814 / E194a)).